We begin with the raw amino-acid sequence, 201 residues long: Phosphoheptose isomerase 2 (201 aa).

Positions 39–198 (VIKAYKNGNK…EEELFGKGFS (160 aa)) constitute an SIS domain. 54–56 (NGG) provides a ligand contact to substrate. Residues H63 and E67 each coordinate Zn(2+). Residues E67, 96 to 97 (ND), 122 to 124 (STS), S127, and Q174 contribute to the substrate site. Positions 174 and 182 each coordinate Zn(2+).

This sequence belongs to the SIS family. GmhA subfamily. Homotetramer. Zn(2+) is required as a cofactor.

It is found in the cytoplasm. The enzyme catalyses 2 D-sedoheptulose 7-phosphate = D-glycero-alpha-D-manno-heptose 7-phosphate + D-glycero-beta-D-manno-heptose 7-phosphate. Its pathway is carbohydrate biosynthesis; D-glycero-D-manno-heptose 7-phosphate biosynthesis; D-glycero-alpha-D-manno-heptose 7-phosphate and D-glycero-beta-D-manno-heptose 7-phosphate from sedoheptulose 7-phosphate: step 1/1. It participates in capsule biogenesis; capsule polysaccharide biosynthesis. Functionally, catalyzes the isomerization of sedoheptulose 7-phosphate in D-glycero-D-manno-heptose 7-phosphate. No activity with L-galacto-heptulose, L-galacto-heptulose 7-phosphate or D-manno-heptulose. The protein is Phosphoheptose isomerase 2 of Campylobacter jejuni subsp. jejuni serotype O:2 (strain ATCC 700819 / NCTC 11168).